The following is a 300-amino-acid chain: Protoheme IX farnesyltransferase (300 aa).

Transmembrane regions (helical) follow at residues 31 to 51 (VMSL…NSLH), 52 to 72 (PFIS…AGAI), 92 to 112 (IVRG…MAFF), 123 to 145 (FLSA…MWLK), 152 to 172 (IVIG…SVSG), 179 to 199 (VILF…LALF), 225 to 245 (ILIY…VGMS), 247 to 267 (IIYL…SISL), and 280 to 300 (FFAY…FCRV).

This sequence belongs to the UbiA prenyltransferase family. Protoheme IX farnesyltransferase subfamily.

It is found in the cell inner membrane. It catalyses the reaction heme b + (2E,6E)-farnesyl diphosphate + H2O = Fe(II)-heme o + diphosphate. Its pathway is porphyrin-containing compound metabolism; heme O biosynthesis; heme O from protoheme: step 1/1. Its function is as follows. Converts heme B (protoheme IX) to heme O by substitution of the vinyl group on carbon 2 of heme B porphyrin ring with a hydroxyethyl farnesyl side group. The chain is Protoheme IX farnesyltransferase from Rickettsia bellii (strain OSU 85-389).